The sequence spans 273 residues: 4-hydroxy-tetrahydrodipicolinate reductase (273 aa).

Residues 12–17 (GAGGRM) and Glu-38 each bind NAD(+). Arg-39 is an NADP(+) binding site. NAD(+) contacts are provided by residues 102–104 (GTT) and 126–129 (AANF). His-159 serves as the catalytic Proton donor/acceptor. (S)-2,3,4,5-tetrahydrodipicolinate is bound at residue His-160. The active-site Proton donor is the Lys-163. 169 to 170 (GT) serves as a coordination point for (S)-2,3,4,5-tetrahydrodipicolinate.

It belongs to the DapB family. In terms of assembly, homotetramer.

Its subcellular location is the cytoplasm. The catalysed reaction is (S)-2,3,4,5-tetrahydrodipicolinate + NAD(+) + H2O = (2S,4S)-4-hydroxy-2,3,4,5-tetrahydrodipicolinate + NADH + H(+). It catalyses the reaction (S)-2,3,4,5-tetrahydrodipicolinate + NADP(+) + H2O = (2S,4S)-4-hydroxy-2,3,4,5-tetrahydrodipicolinate + NADPH + H(+). Its pathway is amino-acid biosynthesis; L-lysine biosynthesis via DAP pathway; (S)-tetrahydrodipicolinate from L-aspartate: step 4/4. Catalyzes the conversion of 4-hydroxy-tetrahydrodipicolinate (HTPA) to tetrahydrodipicolinate. The sequence is that of 4-hydroxy-tetrahydrodipicolinate reductase from Proteus mirabilis (strain HI4320).